Here is a 125-residue protein sequence, read N- to C-terminus: Aldolase FrzH (125 aa).

It catalyses the reaction (2S)-3-(4-methoxyphenyl)-2-[(3S)-3-(methylamino)-8-oxo-1-azaspiro[4.5]decan-1-yl]propanal = (1S,3S,6S,7S,8R)-7-hydroxy-6-[(4-methoxyphenyl)methyl]-3-(methylamino)-5-azatricyclo[6.3.1.0(1,5)]dodecan-9-one. Its pathway is secondary metabolite biosynthesis. Functionally, aldolase; part of the gene cluster that mediates the biosynthesis of the alkaloid (-)-FR901483, a potent immunosuppressant that shows efficacy in animal models and a probable inhibitor of purine nucleotide biosynthesis by targeting phosphoribosylpyrophosphate amidotransferase (PPAT). Within the pathway, FrzH is a new kind of aldolase with no similarities to known aldolases, and which catalyzes the intramolecular aldol condensation via formation of a C9-C3' bond to yield an aza-tricyclic product. The biosynthesis of (-)-FR901483 starts with the condensation of two L-tyrosines to yield (S,S)-dityrosyl-piperazine. This process occurs in 3 steps with the non-canonical nonribosomal peptide synthetase FrzA catalyzing the reduction of L-tyrosine into L-tyrosinal, the spontaneous condensation of 2 L-tyrosinal units, and the subsequent reduction by the NmrA-like family domain-containing oxidoreductase FrzB. The cytochrome P450 monooxygenase FrzC then performs coupling between N10 and C1' to morph the piperazine into a 1,4-diazabicyclo[3.2.1]octane spiro-fused to a 2,5-cyclohexadienone. The dienone portion is further reduced to cyclohexanone by the flavin-dependent reductase FrzD. The methyltranserases (MTs) FrzE and FrzF are then involved in the methylation at the C10' amine and the C4 phenolic oxygen, respectively. The order of the two MTs appear to be interchangeable. Cleavage of the C9-N10' bond by the dioxygenase FrzG then leads to formation of a conjugated iminium. In addition to the oxidation of C9, an additional dehydrogenation between C7 and C8 can occur to give a likely shunt product. The next biosynthetic step is the intramolecular aldol condensation catalyzed by the newly identified aldolase FrzH to yield an aza-tricyclic product with the formation of a C9-C3' bond. The short-chain dehydrogenase/reductase FrzI then produces dephospho-(-)-FR901483 that is phosphorylated at C4'-OH into (-)-FR901483 by the phosphotransferase FrzJ. The sequence is that of Aldolase FrzH from Cladobotryum sp.